The primary structure comprises 185 residues: Ribosome-recycling factor (185 aa).

Positions 141–161 (KQEKDKKISEDDLKRAEKEVQ) are disordered.

This sequence belongs to the RRF family.

It localises to the cytoplasm. Its function is as follows. Responsible for the release of ribosomes from messenger RNA at the termination of protein biosynthesis. May increase the efficiency of translation by recycling ribosomes from one round of translation to another. This chain is Ribosome-recycling factor, found in Geotalea uraniireducens (strain Rf4) (Geobacter uraniireducens).